Consider the following 236-residue polypeptide: 1-(5-phosphoribosyl)-5-[(5-phosphoribosylamino)methylideneamino] imidazole-4-carboxamide isomerase (236 aa).

The active-site Proton acceptor is the D8. D128 functions as the Proton donor in the catalytic mechanism.

It belongs to the HisA/HisF family.

The protein resides in the cytoplasm. The catalysed reaction is 1-(5-phospho-beta-D-ribosyl)-5-[(5-phospho-beta-D-ribosylamino)methylideneamino]imidazole-4-carboxamide = 5-[(5-phospho-1-deoxy-D-ribulos-1-ylimino)methylamino]-1-(5-phospho-beta-D-ribosyl)imidazole-4-carboxamide. It participates in amino-acid biosynthesis; L-histidine biosynthesis; L-histidine from 5-phospho-alpha-D-ribose 1-diphosphate: step 4/9. This chain is 1-(5-phosphoribosyl)-5-[(5-phosphoribosylamino)methylideneamino] imidazole-4-carboxamide isomerase, found in Nitrosopumilus maritimus (strain SCM1).